Reading from the N-terminus, the 2641-residue chain is Inverse autotransporter adhesin YeeJ (2641 aa).

The N-terminal stretch at 1–26 (MGIKLRRLTAGICLVTQLAFPMAAAA) is a signal peptide. In terms of domain architecture, LysM spans 50–98 (VPYILGALESAQSVAERFGISVAELRKLNQFRTFARGFDNVRQGDELDV). Residues 99–118 (PAQVSEKKLTPPPGNSSDNL) are disordered. Positions 125-400 (TSQQIGSLLA…SRYDLVDRNN (276 aa)) are inverse autotransporter. The invasin 3 domain stretch occupies residues 513–605 (QKDSSVSLST…GVDAAKAPAV (93 aa)). Big-1 domains are found at residues 617–711 (HSSI…AGFI), 721–815 (IATL…VSFV), 822–913 (QVDL…VNFI), 920–1017 (ALTL…MTFV), 1024–1116 (VVVL…VNIA), 1123–1220 (QVTL…VTFV), 1227–1319 (VVVL…VNIA), 1326–1423 (QVTL…VTFV), 1430–1523 (QVVL…VHFI), 1531–1633 (IIEL…SINV), 1641–1734 (HLTL…VTYV), 1741–1837 (EISL…VNFT), 1844–1941 (QVNL…VTLI), 1948–2032 (KLTS…PTEV), 2048–2139 (FTSL…LEAI), 2142–2236 (KLTL…VKVT), and 2244–2336 (VASF…ITLV). The tract at residues 2538-2641 (KSWWVNAGDA…FAHATCYKNL (104 aa)) is C-type lectin domain.

The protein belongs to the intimin/invasin family.

Its subcellular location is the cell outer membrane. A probable inverse autotransporter, it may be involved in biofilm formation and cell adhesion. May bind peptidoglycan via its LysM domain. Upon overexpression shows increased mature biofilm formation. The polypeptide is Inverse autotransporter adhesin YeeJ (Escherichia coli O17:K52:H18 (strain UMN026 / ExPEC)).